The following is a 630-amino-acid chain: Putative polypeptide N-acetylgalactosaminyltransferase 10 (630 aa).

Residues 1–6 (MNVDLR) are Cytoplasmic-facing. Residues 7 to 26 (LIVRLLLAILLTSLVTTILM) traverse the membrane as a helical; Signal-anchor for type II membrane protein segment. Topologically, residues 27-630 (GKQIHRRLVK…APYDPQREPH (604 aa)) are lumenal. Asparagine 72, asparagine 84, asparagine 146, and asparagine 168 each carry an N-linked (GlcNAc...) asparagine glycan. 3 cysteine pairs are disulfide-bonded: cysteine 157–cysteine 386, cysteine 377–cysteine 456, and cysteine 496–cysteine 513. Positions 166 to 277 (LPNVTVIIAF…TNWLPPLLEP (112 aa)) are catalytic subdomain A. Substrate is bound by residues aspartate 207 and arginine 238. Aspartate 261 contributes to the Mn(2+) binding site. Serine 262 contributes to the substrate binding site. Histidine 263 lines the Mn(2+) pocket. The segment at 333-394 (PYRTPVLSGA…PCARVGHIGK (62 aa)) is catalytic subdomain B. Position 363 (tryptophan 363) interacts with substrate. Histidine 391 contacts Mn(2+). Residues 483-618 (FSGVIESVAF…NQLEQQWKVG (136 aa)) form the Ricin B-type lectin domain. Asparagine 525 carries N-linked (GlcNAc...) asparagine glycosylation. Cystine bridges form between cysteine 543–cysteine 559 and cysteine 586–cysteine 606.

It belongs to the glycosyltransferase 2 family. GalNAc-T subfamily. Mn(2+) serves as cofactor. During embryonic stages 9-11, weakly expressed in the mesoderm. During embryonic stages 12-13, very weak expression is observed in the somatic mesoderm region. No expression detected from stage 14-15. During embryonic stages 16-17, expressed in the epidermis and the antennomaxillary complex. In third instar larvae, expressed ubiquitously in wing, eye-antennal, leg and haltere imaginal disks.

It is found in the golgi apparatus membrane. It catalyses the reaction L-seryl-[protein] + UDP-N-acetyl-alpha-D-galactosamine = a 3-O-[N-acetyl-alpha-D-galactosaminyl]-L-seryl-[protein] + UDP + H(+). It carries out the reaction L-threonyl-[protein] + UDP-N-acetyl-alpha-D-galactosamine = a 3-O-[N-acetyl-alpha-D-galactosaminyl]-L-threonyl-[protein] + UDP + H(+). The protein operates within protein modification; protein glycosylation. Its function is as follows. May catalyze the initial reaction in O-linked oligosaccharide biosynthesis, the transfer of an N-acetyl-D-galactosamine residue to a serine or threonine residue on the protein receptor. The polypeptide is Putative polypeptide N-acetylgalactosaminyltransferase 10 (pgant10) (Drosophila melanogaster (Fruit fly)).